We begin with the raw amino-acid sequence, 109 residues long: U4-lycotoxin-Ls1a (109 aa).

The N-terminal stretch at 1 to 22 (MKVLVLFSVLFLTLFSYSSTEA) is a signal peptide. A propeptide spanning residues 23-44 (IDEFDSDAEDDMLSLMANEQVR) is cleaved from the precursor. Positions 45-88 (AKACTPRLHDCSHDRHSCCRGELFKDVCYCFYPEGEDKTEVCSC) are knottin domain. Disulfide bonds link C48–C63, C55–C72, C62–C88, and C74–C86. Residues 89 to 108 (QQPKSHKYIEKVVDKAKTVV) are linear cationic cytotoxin domain.

The protein belongs to the neurotoxin 19 (CSTX) family. 05 (U4-Lctx) subfamily. In terms of tissue distribution, expressed by the venom gland.

The protein localises to the secreted. Functionally, enhances the high-affinity desensitization of human P2RX3 purinoceptors. The polypeptide is U4-lycotoxin-Ls1a (Lycosa singoriensis (Wolf spider)).